A 285-amino-acid chain; its full sequence is Guanylate kinase 2, chloroplastic/mitochondrial (285 aa).

A compositionally biased stretch (low complexity) spans 1–19 (MLLTRRFSSALARSPLLPR). A chloroplast and mitochondrion-targeting transit peptide spans 1–42 (MLLTRRFSSALARSPLLPRSLPPPRAVPATPPAPRPPPRRLM). The disordered stretch occupies residues 1-66 (MLLTRRFSSA…PPPPSGADKD (66 aa)). Pro residues predominate over residues 20–36 (SLPPPRAVPATPPAPRP). The segment covering 40–50 (RLMSSSSSGWH) has biased composition (low complexity). The region spanning 91–272 (PMILVISGPS…AVKQVESIID (182 aa)) is the Guanylate kinase-like domain. An ATP-binding site is contributed by 98 to 105 (GPSGVGKD). Catalysis depends on residues arginine 130, arginine 224, and arginine 235. ATP is bound at residue asparagine 255.

It belongs to the guanylate kinase family. In terms of assembly, monomer.

Its subcellular location is the plastid. The protein localises to the chloroplast. The protein resides in the mitochondrion. The catalysed reaction is GMP + ATP = GDP + ADP. Functionally, essential for recycling GMP and indirectly, cGMP. Essential for chloroplast differentiation at early stage of leaf development. May not be involved in the synthesis and maintenance of the organellar DNA during leaf development. The protein is Guanylate kinase 2, chloroplastic/mitochondrial (V2) of Oryza sativa subsp. japonica (Rice).